A 481-amino-acid polypeptide reads, in one-letter code: Subtilisin-like protease 1 (481 aa).

Residues 1–19 form the signal peptide; it reads MGVFRFISISLAAVSAANA. Positions 20–116 are excised as a propeptide; sequence AQILSMPHAQ…VEPDTIISVH (97 aa). The 82-residue stretch at 34 to 115 folds into the Inhibitor I9 domain; it reads SYIVMMKDDT…FVEPDTIISV (82 aa). Residues 126 to 400 enclose the Peptidase S8 domain; it reads SWGLARISSS…NVLINNGGAK (275 aa). Catalysis depends on charge relay system residues Asp-158 and His-190. The interval 175 to 198 is disordered; that stretch reads GSNQVNDGDDNDRSGHGTHTSGTM. The N-linked (GlcNAc...) asparagine glycan is linked to Asn-251. Residues 281 to 312 are disordered; the sequence is GNDNTDARSSSPASEPSVCTVGASAEDDSRSS. A compositionally biased stretch (polar residues) spans 282-294; it reads NDNTDARSSSPAS. Ser-345 functions as the Charge relay system in the catalytic mechanism. Residues 379–455 are disordered; it reads ASISDVGPGT…HPHTPFPGGD (77 aa). Positions 424-450 are enriched in pro residues; sequence PQQPAPGEPSTPAPAPMPPTPQHPHTP.

The protein belongs to the peptidase S8 family.

The protein localises to the secreted. Secreted subtilisin-like serine protease with keratinolytic activity that contributes to pathogenicity. This chain is Subtilisin-like protease 1 (SUB1), found in Arthroderma gypseum (strain ATCC MYA-4604 / CBS 118893) (Microsporum gypseum).